The chain runs to 509 residues: Ribonuclease Y (509 aa).

A helical membrane pass occupies residues 5-25 (IAGVSGIAGAAVGAGACYLWL). A KH domain is found at 199–265 (LINLVNLPSD…TRVIEILIED (67 aa)). The HD domain maps to 325 to 418 (ALAHTLEVAK…VCAADTLSAA (94 aa)).

It belongs to the RNase Y family.

It localises to the cell membrane. Its function is as follows. Endoribonuclease that initiates mRNA decay. This Sulfurovum sp. (strain NBC37-1) protein is Ribonuclease Y.